The chain runs to 207 residues: Large ribosomal subunit protein uL4 (207 aa).

The segment at 45-89 is disordered; it reads RQGTHKVKTRSEVRGGGRKPWRQKGTGRARQGSIRSPQWRGGGTV. Residues 60 to 71 show a composition bias toward basic residues; sequence GGRKPWRQKGTG.

The protein belongs to the universal ribosomal protein uL4 family. Part of the 50S ribosomal subunit.

Functionally, one of the primary rRNA binding proteins, this protein initially binds near the 5'-end of the 23S rRNA. It is important during the early stages of 50S assembly. It makes multiple contacts with different domains of the 23S rRNA in the assembled 50S subunit and ribosome. Its function is as follows. Forms part of the polypeptide exit tunnel. The protein is Large ribosomal subunit protein uL4 of Bacillus anthracis (strain A0248).